The chain runs to 273 residues: Large ribosomal subunit protein uL2 (273 aa).

Disordered stretches follow at residues 30-50 and 221-273; these read YAPLLDTKSKTGGRNNFGRIT and RGTA…RRGK. Over residues 253–273 the composition is skewed to basic residues; that stretch reads KGKKTRHNKRTDKFIVRRRGK.

The protein belongs to the universal ribosomal protein uL2 family. As to quaternary structure, part of the 50S ribosomal subunit. Forms a bridge to the 30S subunit in the 70S ribosome.

In terms of biological role, one of the primary rRNA binding proteins. Required for association of the 30S and 50S subunits to form the 70S ribosome, for tRNA binding and peptide bond formation. It has been suggested to have peptidyltransferase activity; this is somewhat controversial. Makes several contacts with the 16S rRNA in the 70S ribosome. The sequence is that of Large ribosomal subunit protein uL2 from Pasteurella multocida (strain Pm70).